The primary structure comprises 173 residues: Alpha-crystallin A chain (173 aa).

An N-acetylmethionine modification is found at methionine 1. The interval 1–63 (MDITIQHPWF…RTVLESGISE (63 aa)) is required for complex formation with BFSP1 and BFSP2. Position 6 is a deamidated glutamine; partial (glutamine 6). Serine 45 is modified (phosphoserine). Glutamine 50 is modified (deamidated glutamine; partial). Residues 52 to 164 (LFRTVLESGI…SDRSIPVSRE (113 aa)) enclose the sHSP domain. N6-acetyllysine occurs at positions 70 and 99. Residues histidine 100, glutamate 102, and histidine 107 each contribute to the Zn(2+) site. The residue at position 122 (serine 122) is a Phosphoserine. A Deamidated asparagine; partial modification is found at asparagine 123. The segment covering 146–167 (IHSDMDASHSDRSIPVSREEKP) has biased composition (basic and acidic residues). Positions 146-173 (IHSDMDASHSDRSIPVSREEKPTLAPSS) are disordered. Histidine 154 lines the Zn(2+) pocket. O-linked (GlcNAc) serine glycosylation is present at serine 162.

It belongs to the small heat shock protein (HSP20) family. In terms of assembly, heteromer composed of three CRYAA and one CRYAB subunits. Inter-subunit bridging via zinc ions enhances stability, which is crucial as there is no protein turn over in the lens. Can also form homodimers and homotetramers (dimers of dimers) which serve as the building blocks of homooligomers. Within homooligomers, the zinc-binding motif is created from residues of 3 different molecules. His-100 and Glu-102 from one molecule are ligands of the zinc ion, and His-107 and His-154 residues from additional molecules complete the site with tetrahedral coordination geometry. Part of a complex required for lens intermediate filament formation composed of BFSP1, BFSP2 and CRYAA. In terms of processing, acetylation at Lys-70 may increase chaperone activity. Post-translationally, undergoes age-dependent proteolytical cleavage at the C-terminus.

The protein resides in the cytoplasm. It is found in the nucleus. Functionally, contributes to the transparency and refractive index of the lens. Acts as a chaperone, preventing aggregation of various proteins under a wide range of stress conditions. Required for the correct formation of lens intermediate filaments as part of a complex composed of BFSP1, BFSP2 and CRYAA. This is Alpha-crystallin A chain (CRYAA) from Osphranter rufus (Red kangaroo).